The sequence spans 473 residues: Lactococcin A secretion protein LcnD-like (473 aa).

Topologically, residues 1-21 are cytoplasmic; sequence MFDKKLLESSELYDKRYRNFS. The chain crosses the membrane as a helical span at residues 22–44; sequence TLIILPLFILLVGGVIFTFFAHK. Residues 45–473 lie on the Extracellular side of the membrane; sequence ELTVISTGSI…FLDKIMGRTS (429 aa).

This sequence belongs to the membrane fusion protein (MFP) (TC 8.A.1) family.

It localises to the cell membrane. Functionally, involved in the secretion of a lactococcin. The chain is Lactococcin A secretion protein LcnD-like (lcnD) from Lactococcus lactis subsp. lactis (strain IL1403) (Streptococcus lactis).